We begin with the raw amino-acid sequence, 225 residues long: Heptaprenylglyceryl phosphate synthase (225 aa).

Lys-6 is a binding site for sn-glycerol 1-phosphate. Mg(2+)-binding residues include Asp-8 and Thr-34. Sn-glycerol 1-phosphate is bound by residues 153-158, Gly-183, and 203-204; these read YVEYSG and GN.

Belongs to the GGGP/HepGP synthase family. Group I subfamily. Homodimer. Mg(2+) serves as cofactor.

The enzyme catalyses sn-glycerol 1-phosphate + all-trans-heptaprenyl diphosphate = 3-heptaprenyl-sn-glycero-1-phosphate + diphosphate. The protein operates within membrane lipid metabolism; glycerophospholipid metabolism. Functionally, prenyltransferase that catalyzes in vivo the transfer of the heptaprenyl moiety of heptaprenyl pyrophosphate (HepPP; 35 carbon atoms) to the C3 hydroxyl of sn-glycerol-1-phosphate (G1P), producing heptaprenylglyceryl phosphate (HepGP). This reaction is an ether-bond-formation step in the biosynthesis of archaea-type G1P-based membrane lipids found in Bacillales. The polypeptide is Heptaprenylglyceryl phosphate synthase (Listeria monocytogenes serotype 4b (strain F2365)).